Here is a 179-residue protein sequence, read N- to C-terminus: Large ribosomal subunit protein uL6 (179 aa).

The protein belongs to the universal ribosomal protein uL6 family. Part of the 50S ribosomal subunit.

Its function is as follows. This protein binds to the 23S rRNA, and is important in its secondary structure. It is located near the subunit interface in the base of the L7/L12 stalk, and near the tRNA binding site of the peptidyltransferase center. This is Large ribosomal subunit protein uL6 from Nocardioides sp. (strain ATCC BAA-499 / JS614).